Consider the following 385-residue polypeptide: Serpin-Z1 (385 aa).

The segment at 317–341 (GAEAAAATADGDCGCSLDFVEPPKK) is RCL.

This sequence belongs to the serpin family.

Its function is as follows. Probable serine protease inhibitor. The chain is Serpin-Z1 from Arabidopsis thaliana (Mouse-ear cress).